Here is a 602-residue protein sequence, read N- to C-terminus: Type 2 DNA topoisomerase 6 subunit B (602 aa).

ATP-binding positions include Asn-40, Asp-71, 92–93 (SR), 102–109 (GQQGIGIS), and Lys-425.

Belongs to the TOP6B family. In terms of assembly, homodimer. Heterotetramer of two Top6A and two Top6B chains.

The enzyme catalyses ATP-dependent breakage, passage and rejoining of double-stranded DNA.. Its function is as follows. Relaxes both positive and negative superturns and exhibits a strong decatenase activity. The sequence is that of Type 2 DNA topoisomerase 6 subunit B from Archaeoglobus fulgidus (strain ATCC 49558 / DSM 4304 / JCM 9628 / NBRC 100126 / VC-16).